A 143-amino-acid chain; its full sequence is Mannitol-specific phosphotransferase enzyme IIA component (143 aa).

The PTS EIIA type-2 domain maps to 1–142 (MKLLKNNIYI…DKVLEFLAKH (142 aa)). Residue His61 is the Tele-phosphohistidine intermediate of the active site. His61 carries the post-translational modification Phosphohistidine; by HPr.

It is found in the cytoplasm. Its function is as follows. The phosphoenolpyruvate-dependent sugar phosphotransferase system (sugar PTS), a major carbohydrate active transport system, catalyzes the phosphorylation of incoming sugar substrates concomitantly with their translocation across the cell membrane. The enzyme II CmtAB PTS system is involved in D-mannitol transport. In Mycoplasma pneumoniae (strain ATCC 29342 / M129 / Subtype 1) (Mycoplasmoides pneumoniae), this protein is Mannitol-specific phosphotransferase enzyme IIA component (mtlF).